Consider the following 434-residue polypeptide: Na(+)/H(+) antiporter NhaA 1 (434 aa).

Over residues 1–15 (MISPNPALPTPPHAP) the composition is skewed to pro residues. The interval 1–21 (MISPNPALPTPPHAPTAPGRG) is disordered. Transmembrane regions (helical) follow at residues 34–54 (GGIL…SPAA), 74–94 (LSVS…VVGL), 112–132 (ALPI…FTLI), 143–163 (GWAI…AVVG), 173–193 (FLLT…AVFY), 196–216 (GIAF…GILV), 222–242 (AWYV…ASGI), 245–265 (TIAG…RAGV), 294–314 (IAVP…LEGL), 326–346 (IIVA…LLVA), 362–382 (VLGL…VGEL), and 393–413 (AVKV…GTLL).

This sequence belongs to the NhaA Na(+)/H(+) (TC 2.A.33) antiporter family.

It localises to the cell membrane. The catalysed reaction is Na(+)(in) + 2 H(+)(out) = Na(+)(out) + 2 H(+)(in). In terms of biological role, na(+)/H(+) antiporter that extrudes sodium in exchange for external protons. The chain is Na(+)/H(+) antiporter NhaA 1 from Clavibacter michiganensis subsp. michiganensis (strain NCPPB 382).